The sequence spans 89 residues: Small ribosomal subunit protein uS15 (89 aa).

Belongs to the universal ribosomal protein uS15 family. As to quaternary structure, part of the 30S ribosomal subunit. Forms a bridge to the 50S subunit in the 70S ribosome, contacting the 23S rRNA.

One of the primary rRNA binding proteins, it binds directly to 16S rRNA where it helps nucleate assembly of the platform of the 30S subunit by binding and bridging several RNA helices of the 16S rRNA. Functionally, forms an intersubunit bridge (bridge B4) with the 23S rRNA of the 50S subunit in the ribosome. This is Small ribosomal subunit protein uS15 from Ligilactobacillus salivarius (strain UCC118) (Lactobacillus salivarius).